We begin with the raw amino-acid sequence, 1032 residues long: Putative oxidoreductase YgfK (1032 aa).

Residues 928–958 (RFQTLHLDAYCNECGNCAQFCPWNGKPYKDK) form the 4Fe-4S ferredoxin-type domain. [4Fe-4S] cluster is bound by residues Cys-938, Cys-941, Cys-944, and Cys-948.

[4Fe-4S] cluster serves as cofactor.

Its function is as follows. Could be an iron-sulfur flavoprotein with NADPH:O(2) oxidoreductase activity. The sequence is that of Putative oxidoreductase YgfK (ygfK) from Escherichia coli O157:H7.